Reading from the N-terminus, the 339-residue chain is Small ribosomal subunit protein mS27 (339 aa).

A mitochondrion-targeting transit peptide spans 1 to 37 (MGTITVVINEGPILLIRALHRATTNKKMFRSTVWRRF).

It belongs to the mitochondrion-specific ribosomal protein mS27 family. Component of the mitochondrial small ribosomal subunit (mt-SSU). Mature yeast 74S mitochondrial ribosomes consist of a small (37S) and a large (54S) subunit. The 37S small subunit contains a 15S ribosomal RNA (15S mt-rRNA) and 34 different proteins. The 54S large subunit contains a 21S rRNA (21S mt-rRNA) and 46 different proteins.

The protein resides in the mitochondrion. In terms of biological role, component of the mitochondrial ribosome (mitoribosome), a dedicated translation machinery responsible for the synthesis of mitochondrial genome-encoded proteins, including at least some of the essential transmembrane subunits of the mitochondrial respiratory chain. The mitoribosomes are attached to the mitochondrial inner membrane and translation products are cotranslationally integrated into the membrane. The sequence is that of Small ribosomal subunit protein mS27 (MRP13) from Saccharomyces cerevisiae (strain ATCC 204508 / S288c) (Baker's yeast).